Reading from the N-terminus, the 155-residue chain is 3-dehydroquinate dehydratase (155 aa).

The active-site Proton acceptor is the Tyr-31. Residues Asn-83, His-89, and Asp-96 each coordinate substrate. Residue His-109 is the Proton donor of the active site. Residues 110 to 111 and Arg-120 each bind substrate; that span reads LS.

Belongs to the type-II 3-dehydroquinase family. Homododecamer.

The enzyme catalyses 3-dehydroquinate = 3-dehydroshikimate + H2O. Its pathway is metabolic intermediate biosynthesis; chorismate biosynthesis; chorismate from D-erythrose 4-phosphate and phosphoenolpyruvate: step 3/7. Functionally, catalyzes a trans-dehydration via an enolate intermediate. The chain is 3-dehydroquinate dehydratase from Laribacter hongkongensis (strain HLHK9).